The chain runs to 94 residues: Small ribosomal subunit protein bS18 (94 aa).

It belongs to the bacterial ribosomal protein bS18 family. Part of the 30S ribosomal subunit. Forms a tight heterodimer with protein bS6.

Its function is as follows. Binds as a heterodimer with protein bS6 to the central domain of the 16S rRNA, where it helps stabilize the platform of the 30S subunit. This Rickettsia bellii (strain OSU 85-389) protein is Small ribosomal subunit protein bS18.